A 104-amino-acid chain; its full sequence is NADH-quinone oxidoreductase subunit K (104 aa).

The next 3 membrane-spanning stretches (helical) occupy residues 7–27, 31–51, and 63–83; these read PDMA…GVLV, LLFM…AFVA, and VMFL…LAIL.

The protein belongs to the complex I subunit 4L family. As to quaternary structure, NDH-1 is composed of 14 different subunits. Subunits NuoA, H, J, K, L, M, N constitute the membrane sector of the complex.

It localises to the cell inner membrane. The catalysed reaction is a quinone + NADH + 5 H(+)(in) = a quinol + NAD(+) + 4 H(+)(out). NDH-1 shuttles electrons from NADH, via FMN and iron-sulfur (Fe-S) centers, to quinones in the respiratory chain. The immediate electron acceptor for the enzyme in this species is believed to be ubiquinone. Couples the redox reaction to proton translocation (for every two electrons transferred, four hydrogen ions are translocated across the cytoplasmic membrane), and thus conserves the redox energy in a proton gradient. This Gluconacetobacter diazotrophicus (strain ATCC 49037 / DSM 5601 / CCUG 37298 / CIP 103539 / LMG 7603 / PAl5) protein is NADH-quinone oxidoreductase subunit K.